The chain runs to 314 residues: Methionyl-tRNA formyltransferase (314 aa).

Residue Ser113 to Pro116 participates in (6S)-5,6,7,8-tetrahydrofolate binding.

It belongs to the Fmt family.

It carries out the reaction L-methionyl-tRNA(fMet) + (6R)-10-formyltetrahydrofolate = N-formyl-L-methionyl-tRNA(fMet) + (6S)-5,6,7,8-tetrahydrofolate + H(+). Attaches a formyl group to the free amino group of methionyl-tRNA(fMet). The formyl group appears to play a dual role in the initiator identity of N-formylmethionyl-tRNA by promoting its recognition by IF2 and preventing the misappropriation of this tRNA by the elongation apparatus. The polypeptide is Methionyl-tRNA formyltransferase (Chlorobaculum tepidum (strain ATCC 49652 / DSM 12025 / NBRC 103806 / TLS) (Chlorobium tepidum)).